Here is a 344-residue protein sequence, read N- to C-terminus: Dihydroorotase (344 aa).

2 residues coordinate Zn(2+): histidine 13 and histidine 15. Substrate contacts are provided by residues 15 to 17 (HLR) and asparagine 41. Zn(2+) is bound by residues lysine 99, histidine 136, and histidine 174. Lysine 99 carries the N6-carboxylysine modification. Histidine 136 contacts substrate. Residue leucine 219 coordinates substrate. Aspartate 247 provides a ligand contact to Zn(2+). The active site involves aspartate 247. Substrate is bound by residues histidine 251 and alanine 263.

It belongs to the metallo-dependent hydrolases superfamily. DHOase family. Class II DHOase subfamily. In terms of assembly, homodimer. The cofactor is Zn(2+).

The enzyme catalyses (S)-dihydroorotate + H2O = N-carbamoyl-L-aspartate + H(+). The protein operates within pyrimidine metabolism; UMP biosynthesis via de novo pathway; (S)-dihydroorotate from bicarbonate: step 3/3. Its function is as follows. Catalyzes the reversible cyclization of carbamoyl aspartate to dihydroorotate. This Acinetobacter baumannii (strain AB307-0294) protein is Dihydroorotase.